We begin with the raw amino-acid sequence, 76 residues long: MALVPYTSPLDIVFYPVCAFLFCVIGFAFFATFIVSEMTTAKAQKNIFRELTLALIASMSLGLGLFFVLLAGGIYV.

Transmembrane regions (helical) follow at residues 14–34 (FYPVCAFLFCVIGFAFFATFI) and 54–74 (ALIASMSLGLGLFFVLLAGGI).

The protein belongs to the OST5 family. Component of the oligosaccharyltransferase (OST) complex.

The protein resides in the membrane. Functionally, subunit of the oligosaccharyl transferase (OST) complex that catalyzes the initial transfer of a defined glycan (Glc(3)Man(9)GlcNAc(2) in eukaryotes) from the lipid carrier dolichol-pyrophosphate to an asparagine residue within an Asn-X-Ser/Thr consensus motif in nascent polypeptide chains, the first step in protein N-glycosylation. N-glycosylation occurs cotranslationally and the complex associates with the Sec61 complex at the channel-forming translocon complex that mediates protein translocation across the endoplasmic reticulum (ER). All subunits are required for a maximal enzyme activity. The protein is Dolichyl-diphosphooligosaccharide--protein glycosyltransferase subunit OST5 of Dictyostelium discoideum (Social amoeba).